Here is an 842-residue protein sequence, read N- to C-terminus: Elongation factor 2 (842 aa).

In terms of domain architecture, tr-type G spans 17–346 (ANVRNMSVIA…MIVLHLPSPV (330 aa)). GTP-binding positions include 26–33 (AHVDHGKS), 158–161 (NKVD), and 213–215 (SGL). His-699 is subject to Diphthamide.

It belongs to the TRAFAC class translation factor GTPase superfamily. Classic translation factor GTPase family. EF-G/EF-2 subfamily.

It is found in the cytoplasm. The enzyme catalyses GTP + H2O = GDP + phosphate + H(+). It functions in the pathway protein biosynthesis; polypeptide chain elongation. Functionally, catalyzes the GTP-dependent ribosomal translocation step during translation elongation. During this step, the ribosome changes from the pre-translocational (PRE) to the post-translocational (POST) state as the newly formed A-site-bound peptidyl-tRNA and P-site-bound deacylated tRNA move to the P and E sites, respectively. Catalyzes the coordinated movement of the two tRNA molecules, the mRNA and conformational changes in the ribosome. The chain is Elongation factor 2 (EFT2) from Meyerozyma guilliermondii (strain ATCC 6260 / CBS 566 / DSM 6381 / JCM 1539 / NBRC 10279 / NRRL Y-324) (Yeast).